The following is a 307-amino-acid chain: Potassium channel subfamily K member 7 (307 aa).

At 1–10 (MGSLKPWARY) the chain is on the cytoplasmic side. The chain crosses the membrane as a helical span at residues 11-31 (LLLLMAHLLAMGLGAVVLQAL). N-linked (GlcNAc...) asparagine glycosylation is present at Asn-83. Positions 92-118 (LPSALLFTASILTTTGYGHMAPLSSGG) form an intramembrane region, pore-forming. A helical transmembrane segment spans residues 120–140 (AFCVVYAALGLPASLALVAAL). Residues 141 to 172 (RHCLLPVFSRPGDWVAIRWQLAPAQAALLQAA) lie on the Cytoplasmic side of the membrane. Residues 173–193 (GLGLLVACVFMLLPALVLWGV) form a helical membrane-spanning segment. Residues 199–227 (LLEAIYFCFGSLSTIGLGDLLPAHGRGLH) constitute an intramembrane region (pore-forming). The chain crosses the membrane as a helical span at residues 233–253 (LGQFALLGYLLLGLLAMLLAV). At 254–307 (ETFSELPQVRAMVKFFGPSGSRTDEDQDGILGQDELALSTVLPDAPVLGPTTPA) the chain is on the cytoplasmic side.

This sequence belongs to the two pore domain potassium channel (TC 1.A.1.8) family. As to quaternary structure, homodimer. In terms of tissue distribution, detected in embryo, eye, lung and liver. Weakly expressed in colon, testis, atria, kidney, intestine, bladder, uterus, ovary, salivary gland, thymus and brain stem. Not detected in brain, cerebellum, spinal cord, heart, ventricle, skeletal muscle, liver, placenta and pancreas. In the eye, highly expressed in the retinal ganglion cell layer and inner nuclear layer.

Its subcellular location is the membrane. Its function is as follows. Probable potassium channel subunit. No channel activity observed in vitro as protein remains in the endoplasmic reticulum. May need to associate with an as yet unknown partner in order to reach the plasma membrane. The polypeptide is Potassium channel subfamily K member 7 (Kcnk7) (Mus musculus (Mouse)).